We begin with the raw amino-acid sequence, 201 residues long: Imidazole glycerol phosphate synthase subunit HisH (201 aa).

Residues 1–201 enclose the Glutamine amidotransferase type-1 domain; it reads MVFIADYGAG…LQVLKNFAEF (201 aa). The Nucleophile role is filled by Cys-79. Catalysis depends on residues His-183 and Glu-185.

In terms of assembly, heterodimer of HisH and HisF.

It localises to the cytoplasm. It carries out the reaction 5-[(5-phospho-1-deoxy-D-ribulos-1-ylimino)methylamino]-1-(5-phospho-beta-D-ribosyl)imidazole-4-carboxamide + L-glutamine = D-erythro-1-(imidazol-4-yl)glycerol 3-phosphate + 5-amino-1-(5-phospho-beta-D-ribosyl)imidazole-4-carboxamide + L-glutamate + H(+). The enzyme catalyses L-glutamine + H2O = L-glutamate + NH4(+). Its pathway is amino-acid biosynthesis; L-histidine biosynthesis; L-histidine from 5-phospho-alpha-D-ribose 1-diphosphate: step 5/9. Its function is as follows. IGPS catalyzes the conversion of PRFAR and glutamine to IGP, AICAR and glutamate. The HisH subunit catalyzes the hydrolysis of glutamine to glutamate and ammonia as part of the synthesis of IGP and AICAR. The resulting ammonia molecule is channeled to the active site of HisF. This Chlorobaculum tepidum (strain ATCC 49652 / DSM 12025 / NBRC 103806 / TLS) (Chlorobium tepidum) protein is Imidazole glycerol phosphate synthase subunit HisH.